Here is a 130-residue protein sequence, read N- to C-terminus: Large ribosomal subunit protein bL19 (130 aa).

This sequence belongs to the bacterial ribosomal protein bL19 family.

Its function is as follows. This protein is located at the 30S-50S ribosomal subunit interface and may play a role in the structure and function of the aminoacyl-tRNA binding site. This Mycoplasma mycoides subsp. mycoides SC (strain CCUG 32753 / NCTC 10114 / PG1) protein is Large ribosomal subunit protein bL19.